A 179-amino-acid chain; its full sequence is Interferon lambda-4 (179 aa).

Positions 1 to 21 are cleaved as a signal peptide; that stretch reads MRPSVWAAVAAGLWVLCTVIA. The tract at residues 130–149 is disordered; it reads SSRKVPGAQKRRHKPRRADS.

This sequence belongs to the lambda interferon family.

The protein resides in the cytoplasm. Its subcellular location is the secreted. Its function is as follows. Cytokine that may trigger an antiviral response activating the JAK-STAT pathway and up-regulating specifically some interferon-stimulated genes. The protein is Interferon lambda-4 (IFNL4) of Homo sapiens (Human).